We begin with the raw amino-acid sequence, 121 residues long: Tachykinin-3 (121 aa).

Positions Met-1–Ala-16 are cleaved as a signal peptide. Positions Gln-17 to Glu-78 are excised as a propeptide. A Methionine amide modification is found at Met-90. Positions Arg-93–Glu-121 are disordered. The propeptide occupies Ser-94 to Glu-121. Residues Gln-96–Val-108 show a composition bias toward polar residues.

Belongs to the tachykinin family.

The protein resides in the secreted. Tachykinins are active peptides which excite neurons, evoke behavioral responses, are potent vasodilators and secretagogues, and contract (directly or indirectly) many smooth muscles. Is a critical central regulator of gonadal function. In Homo sapiens (Human), this protein is Tachykinin-3 (TAC3).